Reading from the N-terminus, the 175-residue chain is Vesicle-associated membrane protein-associated protein SCS22 (175 aa).

In terms of domain architecture, MSP spans 1 to 125 (MRIVPEKLVF…DDIVFKKIKI (125 aa)). The Cytoplasmic portion of the chain corresponds to 1–154 (MRIVPEKLVF…RAPSAGNGQS (154 aa)). The segment at 133–152 (RKPSGNHDAESARAPSAGNG) is disordered. Residues 155–175 (LSSRALLIITVIALLVGWIYY) form a helical; Anchor for type IV membrane protein membrane-spanning segment.

It belongs to the VAMP-associated protein (VAP) (TC 9.B.17) family.

The protein localises to the membrane. In terms of biological role, targets proteins containing a FFAT motif to membranes. Involved in regulation of phospholipid metabolism. This Saccharomyces cerevisiae (strain ATCC 204508 / S288c) (Baker's yeast) protein is Vesicle-associated membrane protein-associated protein SCS22 (SCS22).